A 258-amino-acid polypeptide reads, in one-letter code: MNTPLRVGIVGCGVLANAMAGHLARQPRPVEIVGCLVRDPGRARGALPCHGSWEALLAQRPDVVVECAGQAALAQYAQAILAAGVDLVPASVGALADDALRGALLEAAAAAGARIRIPSGAMVGIDGLAAARHVGVAEVLYRGTMPPVALQRYVSGPLPERGLAFAGSAREAVARFPKNVNLTGTIALAGIGFDRTRVEMLIDPDATANVHELLARGEFGDFHARVSGLRISESSPSSRIVAGSLAQAALGSGFLALS.

The NAD(+) site is built by Ala-121 and Asn-181. Residue His-211 is part of the active site.

This sequence belongs to the L-aspartate dehydrogenase family.

The enzyme catalyses L-aspartate + NADP(+) + H2O = oxaloacetate + NH4(+) + NADPH + H(+). The catalysed reaction is L-aspartate + NAD(+) + H2O = oxaloacetate + NH4(+) + NADH + H(+). It functions in the pathway cofactor biosynthesis; NAD(+) biosynthesis; iminoaspartate from L-aspartate (dehydrogenase route): step 1/1. In terms of biological role, specifically catalyzes the NAD or NADP-dependent dehydrogenation of L-aspartate to iminoaspartate. The chain is L-aspartate dehydrogenase 1 from Bordetella pertussis (strain Tohama I / ATCC BAA-589 / NCTC 13251).